We begin with the raw amino-acid sequence, 395 residues long: Long-chain-alcohol dehydrogenase 1 (395 aa).

Residues 98–102 and 141–144 each bind NAD(+); these read GSALD and TTSG.

This sequence belongs to the iron-containing alcohol dehydrogenase family. Homooctamer.

The enzyme catalyses glycerol + NAD(+) = dihydroxyacetone + NADH + H(+). The catalysed reaction is a long-chain primary fatty alcohol + 2 NAD(+) + H2O = a long-chain fatty acid + 2 NADH + 3 H(+). Functionally, long-chain alkyl alcohol dehydrogenase that can oxidize a broad range of alkyl alcohols from ethanol to 1-triacontanol (C2 to C30) as well as 1,3-propanediol and acetaldehyde. The best substrate is ethanol. Also oxidizes glycerol. The chain is Long-chain-alcohol dehydrogenase 1 (adh1) from Geobacillus thermodenitrificans (strain NG80-2).